Consider the following 203-residue polypeptide: Hydra actinoporin-like toxin 2 (203 aa).

A signal peptide spans Met-1 to Gly-21. The short motif at Arg-175–Gly-177 is the Cell attachment site element.

This sequence belongs to the actinoporin family. HALT subfamily. As to quaternary structure, octamer or nonamer in membranes. Monomer in the soluble state. In vitro, interacts with folate receptor alpha (of target organism). Strongly expressed in the gland and mucous cells in the endoderm.

Its subcellular location is the nematocyst. It localises to the secreted. The protein resides in the target cell membrane. Functionally, pore-forming protein that forms hydrophilic pores and causes cytolysis. Compared to equinatoxin-2 (AC P61914), it reveals lower cytolysis activity (5-12-fold difference, tested on erythrocytes), a larger pore size (probably 2-3 nm) and different affinity to membrane lipids (100-fold lower affinity to sphingomyelin). Binds to sulfatides (SFT). Shows cytolytic activity on HeLa cells, with a different potency than its paralogs (from most potent to less potent: HALT-4&gt;HALT-6~HALT-1&gt;HALT-3&gt;HALT-7&gt;HALT-2). Pore formation is a multi-step process that involves specific recognition of membrane lipid by a protein aromatic residues rich region, firm binding to the membrane (mainly driven by hydrophobic interactions) accompanied by the transfer of the N-terminal region to the lipid-water interface and finally pore formation after oligomerization of monomers. In vitro, binds to the folate receptor alpha (FOLR1), a GPI-anchored membrane protein that plays a major role in the uptake of folate/folic acid into cells via endocytosis, suggesting a possible involvement of this receptor in the mechanism of HALT-1-induced cell lysis. In vivo, does not cause visible paralysis in larvae of the blowfly Sarcophaga faculata, the most common arthropod prey of Hydra. The polypeptide is Hydra actinoporin-like toxin 2 (Hydra vulgaris (Hydra)).